We begin with the raw amino-acid sequence, 206 residues long: Small ribosomal subunit protein uS4 (206 aa).

One can recognise an S4 RNA-binding domain in the interval 96-156; it reads GRLDNVVYRM…EKAKNQLRVK (61 aa).

Belongs to the universal ribosomal protein uS4 family. As to quaternary structure, part of the 30S ribosomal subunit. Contacts protein S5. The interaction surface between S4 and S5 is involved in control of translational fidelity.

In terms of biological role, one of the primary rRNA binding proteins, it binds directly to 16S rRNA where it nucleates assembly of the body of the 30S subunit. Functionally, with S5 and S12 plays an important role in translational accuracy. This chain is Small ribosomal subunit protein uS4, found in Marinobacter nauticus (strain ATCC 700491 / DSM 11845 / VT8) (Marinobacter aquaeolei).